The following is a 459-amino-acid chain: MEQITKPHCGARLDRLPDCRWHSSMFAIVAFGLLVCWSNAVGGLILAQLKALGWTDNSTTATFSAITTAGMFLGALVGGIIGDKTGRRNAFILYEAIHIASMVVGAFSPNMDFLIACRFVMGVGLGALLVTLFAGFTEYMPGRNRGTWSSRVSFIGNWSYPLCSLIAMGLTPLISAEWNWRVQLLIPAILSLIATALAWRYFPESPRWLESRGRYQEAEKVMRSIEEGVIRQTGKPLPPVVIADDGKAPQAVPYSALLTGVLLKRVILGSCVLIAMNVVQYTLINWLPTIFMTQGINLKDSIVLNTMSMFGAPFGIFIAMLVMDKIPRKTMGVGLLILIAVLGYIYSLQTSMLLITLIGFFLITFVYMYVCYASAVYVPEIWPTEAKLRGSGLANAVGRISGIAAPYAVAVLLSSYGVTGVFILLGAVSIIVAIAIATIGIETKGVSVESLSIDAVANK.

The Cytoplasmic segment spans residues 1–25 (MEQITKPHCGARLDRLPDCRWHSSM). Residues 26–46 (FAIVAFGLLVCWSNAVGGLIL) traverse the membrane as a helical segment. Residues 47-60 (AQLKALGWTDNSTT) lie on the Periplasmic side of the membrane. A helical membrane pass occupies residues 61 to 81 (ATFSAITTAGMFLGALVGGII). Over 82-90 (GDKTGRRNA) the chain is Cytoplasmic. The helical transmembrane segment at 91–111 (FILYEAIHIASMVVGAFSPNM) threads the bilayer. Aspartate 112 is a topological domain (periplasmic). Residues 113 to 133 (FLIACRFVMGVGLGALLVTLF) form a helical membrane-spanning segment. At 134-153 (AGFTEYMPGRNRGTWSSRVS) the chain is on the cytoplasmic side. A helical transmembrane segment spans residues 154 to 174 (FIGNWSYPLCSLIAMGLTPLI). Topologically, residues 175-181 (SAEWNWR) are periplasmic. Residues 182-202 (VQLLIPAILSLIATALAWRYF) form a helical membrane-spanning segment. At 203–271 (PESPRWLESR…LLKRVILGSC (69 aa)) the chain is on the cytoplasmic side. Residues 272 to 292 (VLIAMNVVQYTLINWLPTIFM) traverse the membrane as a helical segment. The Periplasmic segment spans residues 293–301 (TQGINLKDS). Residues 302–322 (IVLNTMSMFGAPFGIFIAMLV) traverse the membrane as a helical segment. Residues 323–329 (MDKIPRK) are Cytoplasmic-facing. Residues 330 to 350 (TMGVGLLILIAVLGYIYSLQT) traverse the membrane as a helical segment. Position 351 (serine 351) is a topological domain, periplasmic. A helical transmembrane segment spans residues 352–372 (MLLITLIGFFLITFVYMYVCY). At 373–399 (ASAVYVPEIWPTEAKLRGSGLANAVGR) the chain is on the cytoplasmic side. The next 2 membrane-spanning stretches (helical) occupy residues 400 to 420 (ISGI…GVTG) and 421 to 441 (VFIL…TIGI). Topologically, residues 442-459 (ETKGVSVESLSIDAVANK) are cytoplasmic.

Belongs to the major facilitator superfamily. Sugar transporter (TC 2.A.1.1) family.

It localises to the cell inner membrane. The sequence is that of Putative metabolite transport protein YdjK (ydjK) from Escherichia coli (strain K12).